The following is a 299-amino-acid chain: ATP synthase gamma chain (299 aa).

The protein belongs to the ATPase gamma chain family. In terms of assembly, F-type ATPases have 2 components, CF(1) - the catalytic core - and CF(0) - the membrane proton channel. CF(1) has five subunits: alpha(3), beta(3), gamma(1), delta(1), epsilon(1). CF(0) has three main subunits: a, b and c.

It localises to the cell membrane. Functionally, produces ATP from ADP in the presence of a proton gradient across the membrane. The gamma chain is believed to be important in regulating ATPase activity and the flow of protons through the CF(0) complex. The protein is ATP synthase gamma chain of Leifsonia xyli subsp. xyli (strain CTCB07).